The primary structure comprises 98 residues: Large ribosomal subunit protein mL53 (98 aa).

Belongs to the mitochondrion-specific ribosomal protein mL53 family. As to quaternary structure, component of the mitochondrial large ribosomal subunit (mt-LSU). Mature yeast 74S mitochondrial ribosomes consist of a small (37S) and a large (54S) subunit. The 37S small subunit contains a 15S ribosomal RNA (15S mt-rRNA) and 34 different proteins. The 54S large subunit contains a 21S rRNA (21S mt-rRNA) and 46 different proteins.

The protein localises to the mitochondrion. In terms of biological role, component of the mitochondrial ribosome (mitoribosome), a dedicated translation machinery responsible for the synthesis of mitochondrial genome-encoded proteins, including at least some of the essential transmembrane subunits of the mitochondrial respiratory chain. The mitoribosomes are attached to the mitochondrial inner membrane and translation products are cotranslationally integrated into the membrane. In Saccharomyces cerevisiae (strain ATCC 204508 / S288c) (Baker's yeast), this protein is Large ribosomal subunit protein mL53 (MRPL44).